The following is a 386-amino-acid chain: Benzoyl-CoA reductase subunit C (386 aa).

Belongs to the FldB/FldC dehydratase alpha/beta subunit family. In terms of assembly, heterotetramer composed of A, B, C, and D subunits. It depends on iron-sulfur cluster as a cofactor. Requires an oxidized flavin as cofactor.

The enzyme catalyses cyclohexa-1,5-diene-1-carbonyl-CoA + oxidized 2[4Fe-4S]-[ferredoxin] + 2 ADP + 2 phosphate = reduced 2[4Fe-4S]-[ferredoxin] + benzoyl-CoA + 2 ATP + 2 H2O. The catalysed reaction is 3-hydroxybenzoyl-CoA + AH2 + 2 ATP + 2 H2O = 3-hydroxycyclohexa-1,5-diene-1-carbonyl-CoA + A + 2 ADP + 2 phosphate + 2 H(+). Catalyzes the anaerobic reduction of benzoyl-CoA and 3-hydroxybenzoyl-CoA to form cyclohexa-1,5-diene-1-carbonyl-CoA and 3-hydroxycyclohexa-1,5-diene-1-carbonyl-CoA, respectively. The enzyme also reduces other benzoyl-CoA analogs with small substituents at the aromatic ring. This Thauera aromatica protein is Benzoyl-CoA reductase subunit C (bcrC).